We begin with the raw amino-acid sequence, 240 residues long: Probable Ni/Fe-hydrogenase B-type cytochrome subunit (240 aa).

The next 4 helical transmembrane spans lie at 31-51 (LWHW…YFIG), 75-95 (FAAG…AFVG), 142-163 (LAMF…FALY), and 196-213 (LGMW…YLAA).

This sequence belongs to the HupC/HyaC/HydC family.

It localises to the cell membrane. In terms of biological role, probable b-type cytochrome. The polypeptide is Probable Ni/Fe-hydrogenase B-type cytochrome subunit (hupZ) (Azotobacter chroococcum mcd 1).